The chain runs to 442 residues: Glutamate synthase large subunit-like protein (442 aa).

Positions 108–133 (LGRGATASGTSTTTGDGGMTDEERGH) are disordered. Positions 109-121 (GRGATASGTSTTT) are enriched in low complexity.

Belongs to the glutamate synthase family.

The protein is Glutamate synthase large subunit-like protein (glxD) of Rhizobium meliloti (strain 1021) (Ensifer meliloti).